Here is a 1861-residue protein sequence, read N- to C-terminus: Polyketide synthase 2 (1861 aa).

Residues 109–525 enclose the Ketosynthase family 3 (KS3) domain; sequence DSKIAIIGMS…GGNSALLLED (417 aa). Active-site for beta-ketoacyl synthase activity residues include C264, H399, and H441. Positions 626–931 are malonyl-CoA:ACP transacylase (MAT) domain; that stretch reads GFVFSGQGAQ…PSLHRKDDGW (306 aa). S716 functions as the For acyl/malonyl transferase activity in the catalytic mechanism. The segment at 1008 to 1312 is product template (PT) domain; the sequence is TSSVQKVIQQ…VFGGMTVLPP (305 aa). The interval 1012–1146 is N-terminal hotdog fold; sequence QKVIQQTDGP…CILRFADPKS (135 aa). The PKS/mFAS DH domain maps to 1012–1318; that stretch reads QKVIQQTDGP…VLPPRRGADA (307 aa). H1045 acts as the Proton acceptor; for dehydratase activity in catalysis. The interval 1174 to 1318 is C-terminal hotdog fold; the sequence is DSLLSKGIVY…VLPPRRGADA (145 aa). D1232 functions as the Proton donor; for dehydratase activity in the catalytic mechanism. One can recognise a Carrier 1 domain in the interval 1356 to 1433; that stretch reads SPQSGAIHRI…ELRLFLAADQ (78 aa). S1393 bears the O-(pantetheine 4'-phosphoryl)serine mark. Residues 1441 to 1470 are disordered; the sequence is CESSNGQHTPQTSDKGSGTLTAQKPDHDTD. The span at 1442–1462 shows a compositional bias: polar residues; it reads ESSNGQHTPQTSDKGSGTLTA. The Carrier 2 domain maps to 1472 to 1546; that stretch reads EMTLNRVCAI…SLQKTLRGTE (75 aa). Residue S1506 is modified to O-(pantetheine 4'-phosphoryl)serine. The thioesterase (TE) domain stretch occupies residues 1582–1855; it reads ASAPHATSIL…IIEMSNLIGD (274 aa). The For thioesterase activity role is filled by S1685.

Functionally, polyketide synthase; part of the Pks2 gene cluster that mediates the formation of infectious structures (appressoria), enabling these fungi to kill insects faster. The product of the Pks2 gene cluster is different from the one of Pks1 and has still not been identified. The protein is Polyketide synthase 2 of Metarhizium acridum (strain CQMa 102).